We begin with the raw amino-acid sequence, 346 residues long: Methylthioribose-1-phosphate isomerase (346 aa).

Substrate-binding positions include 44–46, R87, and Q194; that span reads RGA. D235 serves as the catalytic Proton donor. Substrate is bound at residue 245-246; sequence NK.

The protein belongs to the eIF-2B alpha/beta/delta subunits family. MtnA subfamily.

The catalysed reaction is 5-(methylsulfanyl)-alpha-D-ribose 1-phosphate = 5-(methylsulfanyl)-D-ribulose 1-phosphate. It functions in the pathway amino-acid biosynthesis; L-methionine biosynthesis via salvage pathway; L-methionine from S-methyl-5-thio-alpha-D-ribose 1-phosphate: step 1/6. Catalyzes the interconversion of methylthioribose-1-phosphate (MTR-1-P) into methylthioribulose-1-phosphate (MTRu-1-P). In Desulforamulus reducens (strain ATCC BAA-1160 / DSM 100696 / MI-1) (Desulfotomaculum reducens), this protein is Methylthioribose-1-phosphate isomerase.